The chain runs to 508 residues: CBL-interacting protein kinase 19 (508 aa).

The disordered stretch occupies residues 1-24 (MAATPPSSQHRRPLSSSASAASLA). The segment covering 14–24 (LSSSASAASLA) has biased composition (low complexity). The 255-residue stretch at 37-291 (YELGRLLGHG…VKEVMESRWF (255 aa)) folds into the Protein kinase domain. ATP contacts are provided by residues 43–51 (LGHGTFAKV) and K66. D159 serves as the catalytic Proton acceptor. An activation loop region spans residues 177–206 (DFGLSAVADQFHPDGLLHTFCGTPSYVAPE). The segment at 311–372 (ADGDNDMPEL…EERRQRPLGS (62 aa)) is disordered. Acidic residues predominate over residues 313–322 (GDNDMPELEP). The span at 323 to 337 (SEPPPPPPFPPPPPQ) shows a compositional bias: pro residues. The segment covering 338–347 (QDDDGEESGW) has biased composition (acidic residues). The 45-residue stretch at 354–398 (ASCPATLSSEERRQRPLGSLTRPASLNAFDIISFSKGFDLSGLFE) folds into the NAF domain. A PPI region spans residues 401-430 (GSEVRFISAEPMQTIITKLEEIAKVKSFFV).

Belongs to the protein kinase superfamily. CAMK Ser/Thr protein kinase family. SNF1 subfamily. Requires Mn(2+) as cofactor. Post-translationally, autophosphorylated. Expressed in roots, leaf blades and sheaths and panicles.

It carries out the reaction L-seryl-[protein] + ATP = O-phospho-L-seryl-[protein] + ADP + H(+). The enzyme catalyses L-threonyl-[protein] + ATP = O-phospho-L-threonyl-[protein] + ADP + H(+). CIPK serine-threonine protein kinases interact with CBL proteins. Binding of a CBL protein to the regulatory NAF domain of CIPK protein lead to the activation of the kinase in a calcium-dependent manner. The protein is CBL-interacting protein kinase 19 (CIPK19) of Oryza sativa subsp. japonica (Rice).